A 139-amino-acid polypeptide reads, in one-letter code: Nucleoside diphosphate kinase (139 aa).

ATP contacts are provided by Lys-12, Phe-60, Arg-88, Thr-94, Arg-105, and Asn-115. Catalysis depends on His-118, which acts as the Pros-phosphohistidine intermediate.

Belongs to the NDK family. In terms of assembly, homotetramer. It depends on Mg(2+) as a cofactor.

It is found in the cytoplasm. The enzyme catalyses a 2'-deoxyribonucleoside 5'-diphosphate + ATP = a 2'-deoxyribonucleoside 5'-triphosphate + ADP. It carries out the reaction a ribonucleoside 5'-diphosphate + ATP = a ribonucleoside 5'-triphosphate + ADP. Major role in the synthesis of nucleoside triphosphates other than ATP. The ATP gamma phosphate is transferred to the NDP beta phosphate via a ping-pong mechanism, using a phosphorylated active-site intermediate. In Caldanaerobacter subterraneus subsp. tengcongensis (strain DSM 15242 / JCM 11007 / NBRC 100824 / MB4) (Thermoanaerobacter tengcongensis), this protein is Nucleoside diphosphate kinase.